A 530-amino-acid chain; its full sequence is Berberine bridge enzyme-like 4 (530 aa).

A signal peptide spans M1–A19. C32 and C95 are oxidised to a cystine. Residue N52 is glycosylated (N-linked (GlcNAc...) asparagine). One can recognise an FAD-binding PCMH-type domain in the interval N73 to V247. Positions H110 to C172 form a cross-link, 6-(S-cysteinyl)-8alpha-(pros-histidyl)-FAD (His-Cys). Residues N257, N292, N341, and N441 are each glycosylated (N-linked (GlcNAc...) asparagine).

The protein belongs to the oxygen-dependent FAD-linked oxidoreductase family. FAD is required as a cofactor. In terms of processing, the FAD cofactor is bound via a bicovalent 6-S-cysteinyl, 8alpha-N1-histidyl FAD linkage.

The protein localises to the secreted. Its subcellular location is the cell wall. Its function is as follows. Probable flavin-dependent oxidoreductase. This Arabidopsis thaliana (Mouse-ear cress) protein is Berberine bridge enzyme-like 4.